Consider the following 537-residue polypeptide: Ribonuclease III domain-containing protein RNC1, chloroplastic (537 aa).

The N-terminal 51 residues, 1–51 (MELCSSSPSSSLLRICSSSAPEISFSSSISQFPSKTQSILTKSRFQNLRIC), are a transit peptide targeting the chloroplast. 2 consecutive RNase III domains span residues 141–283 (LLEV…LCFG) and 415–515 (EHPR…TIYG).

Interacts with RNA. Part of large ribonucleo-protein particles that contain CAF1 and/or CAF2.

Its subcellular location is the plastid. It is found in the chloroplast. Functionally, binds specific group II introns in chloroplasts and facilitates their splicing. Acts on both subgroup IIA and subgroup IIB introns. The substrates of the subgroup II also require the CRM domain proteins CAF1 or CAF2. Binds both single-stranded and double-stranded RNA non-specifically, but lacks endonuclease activity. Required for plastid ribosome biogenesis. The polypeptide is Ribonuclease III domain-containing protein RNC1, chloroplastic (Arabidopsis thaliana (Mouse-ear cress)).